Consider the following 320-residue polypeptide: Cytochrome f (320 aa).

The signal sequence occupies residues methionine 1–alanine 35. 4 residues coordinate heme: tyrosine 36, cysteine 56, cysteine 59, and histidine 60. A helical membrane pass occupies residues valine 286–lysine 306.

It belongs to the cytochrome f family. The 4 large subunits of the cytochrome b6-f complex are cytochrome b6, subunit IV (17 kDa polypeptide, petD), cytochrome f and the Rieske protein, while the 4 small subunits are PetG, PetL, PetM and PetN. The complex functions as a dimer. Heme serves as cofactor.

Its subcellular location is the plastid. It is found in the chloroplast thylakoid membrane. Component of the cytochrome b6-f complex, which mediates electron transfer between photosystem II (PSII) and photosystem I (PSI), cyclic electron flow around PSI, and state transitions. This chain is Cytochrome f, found in Lactuca sativa (Garden lettuce).